A 459-amino-acid polypeptide reads, in one-letter code: Bifunctional protein GlmU (459 aa).

The tract at residues 1–229 (MLTQEIIIVI…YEEILGINNK (229 aa)) is pyrophosphorylase. UDP-N-acetyl-alpha-D-glucosamine contacts are provided by residues 11-14 (LAAG), Lys25, Gln76, 81-82 (GT), 103-105 (YGD), Gly140, Glu154, and Asn227. Position 105 (Asp105) interacts with Mg(2+). Asn227 contacts Mg(2+). The linker stretch occupies residues 230–250 (LQLSNLEKIFQKKQINKLLIN). The tract at residues 251-459 (GVTIKDPSHF…MRSKKIIKKN (209 aa)) is N-acetyltransferase. Residues Arg333 and Lys351 each coordinate UDP-N-acetyl-alpha-D-glucosamine. The active-site Proton acceptor is His363. UDP-N-acetyl-alpha-D-glucosamine contacts are provided by Tyr366 and Asn377. Acetyl-CoA contacts are provided by residues Ala380, 386–387 (NY), Ser405, and Ala423.

The protein in the N-terminal section; belongs to the N-acetylglucosamine-1-phosphate uridyltransferase family. It in the C-terminal section; belongs to the transferase hexapeptide repeat family. As to quaternary structure, homotrimer. The cofactor is Mg(2+).

It is found in the cytoplasm. The catalysed reaction is alpha-D-glucosamine 1-phosphate + acetyl-CoA = N-acetyl-alpha-D-glucosamine 1-phosphate + CoA + H(+). It catalyses the reaction N-acetyl-alpha-D-glucosamine 1-phosphate + UTP + H(+) = UDP-N-acetyl-alpha-D-glucosamine + diphosphate. Its pathway is nucleotide-sugar biosynthesis; UDP-N-acetyl-alpha-D-glucosamine biosynthesis; N-acetyl-alpha-D-glucosamine 1-phosphate from alpha-D-glucosamine 6-phosphate (route II): step 2/2. It functions in the pathway nucleotide-sugar biosynthesis; UDP-N-acetyl-alpha-D-glucosamine biosynthesis; UDP-N-acetyl-alpha-D-glucosamine from N-acetyl-alpha-D-glucosamine 1-phosphate: step 1/1. The protein operates within bacterial outer membrane biogenesis; LPS lipid A biosynthesis. Catalyzes the last two sequential reactions in the de novo biosynthetic pathway for UDP-N-acetylglucosamine (UDP-GlcNAc). The C-terminal domain catalyzes the transfer of acetyl group from acetyl coenzyme A to glucosamine-1-phosphate (GlcN-1-P) to produce N-acetylglucosamine-1-phosphate (GlcNAc-1-P), which is converted into UDP-GlcNAc by the transfer of uridine 5-monophosphate (from uridine 5-triphosphate), a reaction catalyzed by the N-terminal domain. This Buchnera aphidicola subsp. Acyrthosiphon pisum (strain 5A) protein is Bifunctional protein GlmU.